Reading from the N-terminus, the 73-residue chain is Small ribosomal subunit protein bS18 (73 aa).

This sequence belongs to the bacterial ribosomal protein bS18 family. In terms of assembly, part of the 30S ribosomal subunit. Forms a tight heterodimer with protein bS6.

Its function is as follows. Binds as a heterodimer with protein bS6 to the central domain of the 16S rRNA, where it helps stabilize the platform of the 30S subunit. This Neorickettsia sennetsu (strain ATCC VR-367 / Miyayama) (Ehrlichia sennetsu) protein is Small ribosomal subunit protein bS18.